The chain runs to 142 residues: Large ribosomal subunit protein uL13 (142 aa).

This sequence belongs to the universal ribosomal protein uL13 family. Part of the 50S ribosomal subunit.

Its function is as follows. This protein is one of the early assembly proteins of the 50S ribosomal subunit, although it is not seen to bind rRNA by itself. It is important during the early stages of 50S assembly. This Shigella sonnei (strain Ss046) protein is Large ribosomal subunit protein uL13.